The sequence spans 370 residues: Vasopressin V2 receptor (370 aa).

Residues 1 to 10 show a composition bias toward polar residues; it reads MLLASTTSAV. The segment at 1–26 is disordered; the sequence is MLLASTTSAVPRTLSPPTPAGNGSRE. Topologically, residues 1–37 are extracellular; the sequence is MLLASTTSAVPRTLSPPTPAGNGSRELLDTRDPLLVQ. An N-linked (GlcNAc...) asparagine glycan is attached at N22. Residues 38-62 traverse the membrane as a helical segment; sequence AELALLSTVFVAVALSNGLVLGALA. Residues 63–76 are Cytoplasmic-facing; sequence RRVRRGRWAPMHVF. A helical transmembrane segment spans residues 77 to 97; sequence IGHLCLADLAVALFQVLPQLA. Topologically, residues 98 to 112 are extracellular; sequence WDATDRFRGPDALCR. Residues 113 to 134 form a helical membrane-spanning segment; sequence AVKYLQMVGMYASSYMILAMTL. Residues 135-158 lie on the Cytoplasmic side of the membrane; it reads DRHRAICRPMLAYRHGGGARWNRP. A helical membrane pass occupies residues 159–179; the sequence is VLVAWAFSLILSLPQLFIFAQ. Topologically, residues 180–199 are extracellular; it reads RDVGNGSGVLDCWAHFAEPW. A helical membrane pass occupies residues 200–219; that stretch reads GLRAYVTWIALMVFVAPALG. The Cytoplasmic segment spans residues 220–270; the sequence is IAACQVLIFREIHSSLVPGPAERAGGCRGGHRTGSPSEGARVSAAMAKTVR. The chain crosses the membrane as a helical span at residues 271–292; sequence MTLVIVIVYVLCWAPFFLVQLW. Topologically, residues 293-307 are extracellular; it reads AAWDPQAPLEGAPFV. A helical membrane pass occupies residues 308 to 327; that stretch reads LLMLLASLNSCTNPWIYAFF. The Cytoplasmic segment spans residues 328-370; it reads SSSVSSELRSLFCWARSRAPPSLGPQEESCATASSFLAKDTSS. C340 is lipidated: S-palmitoyl cysteine.

This sequence belongs to the G-protein coupled receptor 1 family. Vasopressin/oxytocin receptor subfamily. Interacts with ARRDC4. Identified in a complex containing at least ARRDC4, V2R and HGS. Interacts with TMEM147.

The protein resides in the cell membrane. Receptor for arginine vasopressin. The activity of this receptor is mediated by G proteins which activate adenylate cyclase. Involved in renal water reabsorption. This chain is Vasopressin V2 receptor (AVPR2), found in Canis lupus familiaris (Dog).